Here is a 506-residue protein sequence, read N- to C-terminus: Anaerobic nitric oxide reductase transcription regulator NorR (506 aa).

Asp-57 is subject to 4-aspartylphosphate. The Sigma-54 factor interaction domain maps to 187-416; the sequence is MIGLSPAMTQ…LEHAIHRAVV (230 aa). ATP-binding positions include 215 to 222 and 278 to 287; these read GETGTGKE and ADNGTLFLDE. Residues 481 to 500 constitute a DNA-binding region (H-T-H motif); that stretch reads WAASARALETDVANLHRLAK.

The protein operates within nitrogen metabolism; nitric oxide reduction. Its function is as follows. Required for the expression of anaerobic nitric oxide (NO) reductase, acts as a transcriptional activator for at least the norVW operon. Activation also requires sigma-54. The chain is Anaerobic nitric oxide reductase transcription regulator NorR from Salmonella dublin (strain CT_02021853).